The primary structure comprises 263 residues: Putative aliphatic sulfonates transport permease protein SsuC (263 aa).

Residues 1 to 13 (MATPVKKWLLRVA) are Cytoplasmic-facing. Residues 14–34 (PWFLPVGIVAVWQLASSVGWL) form a helical membrane-spanning segment. The Periplasmic segment spans residues 35–43 (STRILPSPE). Residues 44–64 (GVVTAFWTLSASGELWQHLAI) traverse the membrane as a helical segment. In terms of domain architecture, ABC transmembrane type-1 spans 58–242 (LWQHLAISSW…LLGKLADVSA (185 aa)). The Cytoplasmic segment spans residues 65-68 (SSWR). A helical transmembrane segment spans residues 69–89 (ALIGFSIGGSLGLILGLISGL). The Periplasmic portion of the chain corresponds to 90-102 (SRWGERLLDTSIQ). Residues 103–122 (MLRNVPHLALIPLVILWFGI) traverse the membrane as a helical segment. At 123 to 125 (DES) the chain is on the cytoplasmic side. The chain crosses the membrane as a helical span at residues 126 to 148 (AKIFLVALGTLFPIYINTWHGIR). Residues 149 to 164 (NIDRGLVEMARSYGLS) lie on the Periplasmic side of the membrane. A helical membrane pass occupies residues 165–185 (GIPLFIHVILPGALPSIMVGV). The Cytoplasmic segment spans residues 186–187 (RF). The chain crosses the membrane as a helical span at residues 188–208 (ALGLMWLTLIVAETISANSGI). At 209–217 (GYLAMNARE) the chain is on the periplasmic side. Residues 218–238 (FLQTDVVVVAIILYALLGKLA) form a helical membrane-spanning segment. The Cytoplasmic segment spans residues 239 to 263 (DVSAQLLERLWLRWNPAYHLKEATV).

It belongs to the binding-protein-dependent transport system permease family. CysTW subfamily.

It localises to the cell inner membrane. In terms of biological role, part of a binding-protein-dependent transport system for aliphatic sulfonates. Probably responsible for the translocation of the substrate across the membrane. In Escherichia coli (strain K12), this protein is Putative aliphatic sulfonates transport permease protein SsuC (ssuC).